The primary structure comprises 387 residues: Formate-dependent phosphoribosylglycinamide formyltransferase (387 aa).

Residues glutamate 12–leucine 13 and glutamate 72 contribute to the N(1)-(5-phospho-beta-D-ribosyl)glycinamide site. ATP-binding positions include arginine 104, lysine 145, serine 150 to glutamine 155, glutamate 185 to isoleucine 188, and glutamate 193. One can recognise an ATP-grasp domain in the interval aspartate 109–leucine 300. The Mg(2+) site is built by glutamate 258 and glutamate 270. N(1)-(5-phospho-beta-D-ribosyl)glycinamide is bound by residues aspartate 277, lysine 347, and arginine 354–arginine 355.

It belongs to the PurK/PurT family. As to quaternary structure, homodimer.

It catalyses the reaction N(1)-(5-phospho-beta-D-ribosyl)glycinamide + formate + ATP = N(2)-formyl-N(1)-(5-phospho-beta-D-ribosyl)glycinamide + ADP + phosphate + H(+). It participates in purine metabolism; IMP biosynthesis via de novo pathway; N(2)-formyl-N(1)-(5-phospho-D-ribosyl)glycinamide from N(1)-(5-phospho-D-ribosyl)glycinamide (formate route): step 1/1. Its function is as follows. Involved in the de novo purine biosynthesis. Catalyzes the transfer of formate to 5-phospho-ribosyl-glycinamide (GAR), producing 5-phospho-ribosyl-N-formylglycinamide (FGAR). Formate is provided by PurU via hydrolysis of 10-formyl-tetrahydrofolate. The polypeptide is Formate-dependent phosphoribosylglycinamide formyltransferase (Anaeromyxobacter dehalogenans (strain 2CP-C)).